Reading from the N-terminus, the 249-residue chain is Acetylglutamate kinase (249 aa).

Substrate is bound by residues 36-37 (GG), arginine 58, and asparagine 147.

It belongs to the acetylglutamate kinase family. ArgB subfamily.

The protein resides in the cytoplasm. The catalysed reaction is N-acetyl-L-glutamate + ATP = N-acetyl-L-glutamyl 5-phosphate + ADP. Its pathway is amino-acid biosynthesis; L-arginine biosynthesis; N(2)-acetyl-L-ornithine from L-glutamate: step 2/4. Catalyzes the ATP-dependent phosphorylation of N-acetyl-L-glutamate. The polypeptide is Acetylglutamate kinase (Thermus thermophilus (strain ATCC 27634 / DSM 579 / HB8)).